Consider the following 161-residue polypeptide: Allophycocyanin subunit alpha 1 (161 aa).

Position 71 is an N4-methylasparagine (N71). C81 lines the (2R,3E)-phycocyanobilin pocket.

Belongs to the phycobiliprotein family. As to quaternary structure, heterohexamer of two alpha chains, one alpha-B chain and three beta chains. In terms of processing, contains one covalently linked phycocyanobilin chromophore. The chromophore is added by phycocyanobilin lyase CpcS 1.

It localises to the cellular thylakoid membrane. Light-harvesting photosynthetic bile pigment-protein from the phycobiliprotein complex. Allophycocyanin has a maximum absorption at approximately 650 to 653 nanometers. This Nostoc sp. (strain PCC 7120 / SAG 25.82 / UTEX 2576) protein is Allophycocyanin subunit alpha 1 (apcA1).